The chain runs to 378 residues: Queuine tRNA-ribosyltransferase (378 aa).

Asp89 serves as the catalytic Proton acceptor. Substrate-binding positions include 89–93 (DSGGF), Asp143, Gln187, and Gly214. Residues 245–251 (GVGKPED) form an RNA binding region. Catalysis depends on Asp264, which acts as the Nucleophile. The RNA binding; important for wobble base 34 recognition stretch occupies residues 269 to 273 (TRNAR). Residues Cys302, Cys304, Cys307, and His333 each coordinate Zn(2+).

It belongs to the queuine tRNA-ribosyltransferase family. In terms of assembly, homodimer. Within each dimer, one monomer is responsible for RNA recognition and catalysis, while the other monomer binds to the replacement base PreQ1. Zn(2+) serves as cofactor.

The catalysed reaction is 7-aminomethyl-7-carbaguanine + guanosine(34) in tRNA = 7-aminomethyl-7-carbaguanosine(34) in tRNA + guanine. It functions in the pathway tRNA modification; tRNA-queuosine biosynthesis. Catalyzes the base-exchange of a guanine (G) residue with the queuine precursor 7-aminomethyl-7-deazaguanine (PreQ1) at position 34 (anticodon wobble position) in tRNAs with GU(N) anticodons (tRNA-Asp, -Asn, -His and -Tyr). Catalysis occurs through a double-displacement mechanism. The nucleophile active site attacks the C1' of nucleotide 34 to detach the guanine base from the RNA, forming a covalent enzyme-RNA intermediate. The proton acceptor active site deprotonates the incoming PreQ1, allowing a nucleophilic attack on the C1' of the ribose to form the product. After dissociation, two additional enzymatic reactions on the tRNA convert PreQ1 to queuine (Q), resulting in the hypermodified nucleoside queuosine (7-(((4,5-cis-dihydroxy-2-cyclopenten-1-yl)amino)methyl)-7-deazaguanosine). The polypeptide is Queuine tRNA-ribosyltransferase (Yersinia enterocolitica serotype O:8 / biotype 1B (strain NCTC 13174 / 8081)).